The chain runs to 189 residues: Peptidyl-tRNA hydrolase (189 aa).

A tRNA-binding site is contributed by Tyr16. His21 functions as the Proton acceptor in the catalytic mechanism. TRNA-binding residues include Phe67, Asn69, and Asn115.

The protein belongs to the PTH family. In terms of assembly, monomer.

The protein resides in the cytoplasm. The enzyme catalyses an N-acyl-L-alpha-aminoacyl-tRNA + H2O = an N-acyl-L-amino acid + a tRNA + H(+). In terms of biological role, hydrolyzes ribosome-free peptidyl-tRNAs (with 1 or more amino acids incorporated), which drop off the ribosome during protein synthesis, or as a result of ribosome stalling. Catalyzes the release of premature peptidyl moieties from peptidyl-tRNA molecules trapped in stalled 50S ribosomal subunits, and thus maintains levels of free tRNAs and 50S ribosomes. This chain is Peptidyl-tRNA hydrolase, found in Legionella pneumophila (strain Paris).